A 239-amino-acid chain; its full sequence is Ribonuclease HII (239 aa).

One can recognise an RNase H type-2 domain in the interval 18–231 (KIIVGLDEAG…SKNLLKEIEE (214 aa)). 3 residues coordinate a divalent metal cation: aspartate 24, glutamate 25, and aspartate 125.

Belongs to the RNase HII family. The cofactor is Mn(2+). Mg(2+) is required as a cofactor.

The protein resides in the cytoplasm. The enzyme catalyses Endonucleolytic cleavage to 5'-phosphomonoester.. Functionally, endonuclease that specifically degrades the RNA of RNA-DNA hybrids. The sequence is that of Ribonuclease HII from Methanococcus maripaludis (strain C7 / ATCC BAA-1331).